The primary structure comprises 82 residues: Ferredoxin (82 aa).

A 4Fe-4S ferredoxin-type domain is found at 3–31 (KYTIVDKDTCIACGACGAAAPDIYDYDDE). The [4Fe-4S] cluster site is built by Cys12, Cys15, Cys18, and Cys62.

[4Fe-4S] cluster serves as cofactor.

In terms of biological role, ferredoxins are iron-sulfur proteins that transfer electrons in a wide variety of metabolic reactions. This ferredoxin may act as a phosphodonor to cytochrome P450 BioI. This Bacillus subtilis (strain 168) protein is Ferredoxin (fer).